The primary structure comprises 202 residues: Nitrophorin-3 (202 aa).

A signal peptide spans 1 to 23 (MEPYSALLAVTILCLTSTMGVSG). 2 cysteine pairs are disulfide-bonded: C25–C144 and C62–C193. H80 serves as a coordination point for heme.

Belongs to the calycin superfamily. Nitrophorin family. As to quaternary structure, interacts weakly with host coagulation factor IX (F9) (inactive and activated) in the presence of Ca(2+). Salivary gland (at protein level).

The protein localises to the secreted. Functionally, heme-based protein that deliver nitric oxide gas (NO) to the victim while feeding, resulting in vasodilation and inhibition of platelet aggregation. Reversibly binds nitric oxide (NO). Also binds tightly to histamine, which is released by the host to induce wound healing. Exhibits weak anticoagulant activity. This chain is Nitrophorin-3, found in Rhodnius prolixus (Triatomid bug).